A 536-amino-acid chain; its full sequence is Probable galacturonosyltransferase 10 (536 aa).

At 1-16 (MRRRGGDSFRRAGRRK) the chain is on the cytoplasmic side. A helical; Signal-anchor for type II membrane protein transmembrane segment spans residues 17–37 (ISNVVWWVLSGIALLLFFLIL). Over 38–536 (SKAGHIEPRP…SPFMQQCNFH (499 aa)) the chain is Lumenal. 5 N-linked (GlcNAc...) asparagine glycosylation sites follow: N64, N246, N300, N403, and N436.

This sequence belongs to the glycosyltransferase 8 family. Expressed in roots, inflorescences, siliques, leaves and stems.

It localises to the golgi apparatus membrane. The protein operates within glycan metabolism; pectin biosynthesis. Its function is as follows. May be involved in pectin and/or xylans biosynthesis in cell walls. In Arabidopsis thaliana (Mouse-ear cress), this protein is Probable galacturonosyltransferase 10 (GAUT10).